The chain runs to 919 residues: GPI ethanolamine phosphate transferase 1 (919 aa).

Topologically, residues 1–8 (MWSRHRLY) are cytoplasmic. Residues 9 to 29 (FIVAGVLFHLFYLWSIFDIYF) form a helical membrane-spanning segment. The Lumenal segment spans residues 30-456 (VSPLVHGMKQ…TTYNWRFIRT (427 aa)). N-linked (GlcNAc...) asparagine glycans are attached at residues Asn138, Asn196, Asn201, Asn285, and Asn311. Residues 457–477 (IVTLGFLGWIVYSFSIFLRLF) form a helical membrane-spanning segment. Residues 478-487 (ILNRDYNSHK) lie on the Cytoplasmic side of the membrane. A helical membrane pass occupies residues 488–508 (SLLNYFIFGSLTIILNYVLYY). The Lumenal segment spans residues 509–510 (QK). A helical membrane pass occupies residues 511-531 (APFNYYMYLFFPLIFWSEIFT). Topologically, residues 532–558 (DRVVLDDGVKEFLKGISIPKRIILVSA) are cytoplasmic. The chain crosses the membrane as a helical span at residues 559 to 579 (IILVYESIVYAFFDRWIFSLI). At 580 to 598 (FNMLSFYPLICGYRDWKRN) the chain is on the lumenal side. A helical membrane pass occupies residues 599–619 (TLWFITGAAISVFTLLDAVKI). Residue Glu620 is a topological domain, cytoplasmic. Residues 621–641 (SLTQINIASGLIVLTALSGFL) form a helical membrane-spanning segment. Topologically, residues 642-653 (HLRKQLNSYTTT) are lumenal. A helical transmembrane segment spans residues 654–674 (VFICQILLVILMVLATNKSIV). The Cytoplasmic segment spans residues 675–686 (SLQNRTGLPRDA). A helical transmembrane segment spans residues 687–707 (QVAGWVILVVSLLLMPLIHYM). At 708–718 (KPNNNYKVRML) the chain is on the lumenal side. Residues 719–739 (IIFLTFAPTFIILTISFESFF) form a helical membrane-spanning segment. The Cytoplasmic portion of the chain corresponds to 740 to 773 (YLVFSAYIVQWIEIESKLKEQTPNTSHYKQLIRV). Residues 774 to 794 (TIIGFFLLQNAFFGTGNVASI) traverse the membrane as a helical segment. Residues 795-815 (SSFSLDSVYRLMPIFDPFPMG) are Lumenal-facing. A helical transmembrane segment spans residues 816 to 836 (ALLVIKLIIPYIILSAGLGIL). Residues 837 to 845 (NLKLHIKDY) are Cytoplasmic-facing. A helical membrane pass occupies residues 846 to 866 (TISTLIISTSDILSLNFFYLL). Topologically, residues 867-882 (KTEGSWLDIGITISNY) are lumenal. Residues 883 to 903 (CLAILSSLFMLILEIVAHVVL) traverse the membrane as a helical segment. Residues 904 to 919 (KNVQLSKPVIASKKTN) lie on the Cytoplasmic side of the membrane.

This sequence belongs to the PIGG/PIGN/PIGO family. PIGN subfamily.

Its subcellular location is the endoplasmic reticulum membrane. The protein operates within glycolipid biosynthesis; glycosylphosphatidylinositol-anchor biosynthesis. Its function is as follows. Ethanolamine phosphate transferase involved in glycosylphosphatidylinositol-anchor biosynthesis. Transfers ethanolamine phosphate to the first alpha-1,4-linked mannose of the glycosylphosphatidylinositol precursor of GPI-anchor. The protein is GPI ethanolamine phosphate transferase 1 (MCD4) of Kluyveromyces lactis (strain ATCC 8585 / CBS 2359 / DSM 70799 / NBRC 1267 / NRRL Y-1140 / WM37) (Yeast).